A 356-amino-acid chain; its full sequence is Protein RecA (356 aa).

77-84 (GPESSGKT) is an ATP binding site.

This sequence belongs to the RecA family.

The protein resides in the cytoplasm. Can catalyze the hydrolysis of ATP in the presence of single-stranded DNA, the ATP-dependent uptake of single-stranded DNA by duplex DNA, and the ATP-dependent hybridization of homologous single-stranded DNAs. It interacts with LexA causing its activation and leading to its autocatalytic cleavage. This chain is Protein RecA, found in Caulobacter sp. (strain K31).